The sequence spans 34 residues: COP9 signalosome complex subunit 5a (34 aa).

Belongs to the peptidase M67A family. CSN5 subfamily. In terms of assembly, component of the CSN complex, probably composed of CSN1, CSN2, CSN3, CSN4, CSN5 (CSN5A or CSN5B), CSN6 (CSN6A or CSN6B), CSN7 and CSN8. A divalent metal cation serves as cofactor.

It localises to the cytoplasm. The protein resides in the nucleus. In terms of biological role, probable protease subunit of the COP9 signalosome complex (CSN), a complex involved in various cellular and developmental processes such as photomorphogenesis and auxin and jasmonate responses. The CSN complex is an essential regulator of the ubiquitin (Ubl) conjugation pathway by mediating the deneddylation of the cullin subunits of the SCF-type E3 ligase complexes, leading to decrease the Ubl ligase activity of SCF. In the complex, it probably acts as the catalytic center that mediates the cleavage of Nedd8 from cullins. It however has no metalloprotease activity by itself and requires the other subunits of the CSN complex. The CSN complex is involved in repression of photomorphogenesis in darkness by regulating the activity of COP1-containing Ubl ligase complexes. The chain is COP9 signalosome complex subunit 5a (CSN5A) from Brassica oleracea (Wild cabbage).